The following is a 160-amino-acid chain: Cyanate hydratase (160 aa).

Active-site residues include arginine 100, glutamate 103, and serine 126.

The protein belongs to the cyanase family.

The catalysed reaction is cyanate + hydrogencarbonate + 3 H(+) = NH4(+) + 2 CO2. In terms of biological role, catalyzes the reaction of cyanate with bicarbonate to produce ammonia and carbon dioxide. The polypeptide is Cyanate hydratase (Aspergillus flavus (strain ATCC 200026 / FGSC A1120 / IAM 13836 / NRRL 3357 / JCM 12722 / SRRC 167)).